The sequence spans 395 residues: Protein phosphatase methylesterase 1 (395 aa).

Active-site residues include Ser194, Asp222, and His348.

It belongs to the AB hydrolase superfamily.

It carries out the reaction [phosphatase 2A protein]-C-terminal L-leucine methyl ester + H2O = [phosphatase 2A protein]-C-terminal L-leucine + methanol + H(+). Its function is as follows. Demethylates proteins that have been reversibly carboxymethylated. Demethylates the phosphatase PP2A catalytic subunit. The chain is Protein phosphatase methylesterase 1 (PPE1) from Kluyveromyces lactis (strain ATCC 8585 / CBS 2359 / DSM 70799 / NBRC 1267 / NRRL Y-1140 / WM37) (Yeast).